A 563-amino-acid chain; its full sequence is Protein NRT1/ PTR FAMILY 5.9 (563 aa).

A helical membrane pass occupies residues 56–76; that stretch reads TWAGFTSMLPLFSAPLADTYW. T81 is subject to Phosphothreonine. Transmembrane regions (helical) follow at residues 82–102, 110–130, 168–188, 194–214, 317–337, 362–382, 394–414, 441–461, 479–499, and 528–548; these read ILASSSVYFVGLVGLTWTAFA, TISSYFLYSSLCLVSIGLGVL, FFQLWYFGVCTGSLMGVTVMA, FGWVLGFAIPGIVIFLSILVF, FPIWMMLLMFAVIFQLPATFF, TITLSIILLMPLYDKILIPIT, VMERMGVGMFLSIIAIVIAAI, IFWLLPQYILLGISDIFTVVG, FALYTSVFGVGSFVSAALISI, and WLLALTSTISFVVYIFLCKFF.

Belongs to the major facilitator superfamily. Proton-dependent oligopeptide transporter (POT/PTR) (TC 2.A.17) family. In terms of tissue distribution, expressed in roots and flowers.

Its subcellular location is the membrane. The sequence is that of Protein NRT1/ PTR FAMILY 5.9 (NPF5.9) from Arabidopsis thaliana (Mouse-ear cress).